A 181-amino-acid polypeptide reads, in one-letter code: NADH-quinone oxidoreductase subunit B (181 aa).

[4Fe-4S] cluster-binding residues include cysteine 60, cysteine 61, cysteine 125, and cysteine 155.

Belongs to the complex I 20 kDa subunit family. In terms of assembly, NDH-1 is composed of 14 different subunits. Subunits NuoB, C, D, E, F, and G constitute the peripheral sector of the complex. Requires [4Fe-4S] cluster as cofactor.

The protein localises to the cell inner membrane. The catalysed reaction is a quinone + NADH + 5 H(+)(in) = a quinol + NAD(+) + 4 H(+)(out). Its function is as follows. NDH-1 shuttles electrons from NADH, via FMN and iron-sulfur (Fe-S) centers, to quinones in the respiratory chain. Couples the redox reaction to proton translocation (for every two electrons transferred, four hydrogen ions are translocated across the cytoplasmic membrane), and thus conserves the redox energy in a proton gradient. This is NADH-quinone oxidoreductase subunit B from Novosphingobium aromaticivorans (strain ATCC 700278 / DSM 12444 / CCUG 56034 / CIP 105152 / NBRC 16084 / F199).